The chain runs to 325 residues: N-acetyl-gamma-glutamyl-phosphate reductase (325 aa).

The active site involves C135.

It belongs to the NAGSA dehydrogenase family. Type 1 subfamily.

Its subcellular location is the cytoplasm. The catalysed reaction is N-acetyl-L-glutamate 5-semialdehyde + phosphate + NADP(+) = N-acetyl-L-glutamyl 5-phosphate + NADPH + H(+). It functions in the pathway amino-acid biosynthesis; L-arginine biosynthesis; N(2)-acetyl-L-ornithine from L-glutamate: step 3/4. Catalyzes the NADPH-dependent reduction of N-acetyl-5-glutamyl phosphate to yield N-acetyl-L-glutamate 5-semialdehyde. The chain is N-acetyl-gamma-glutamyl-phosphate reductase from Karelsulcia muelleri (strain GWSS) (Sulcia muelleri).